The following is a 419-amino-acid chain: Creatine kinase S-type, mitochondrial (419 aa).

The N-terminal 39 residues, 1-39 (MASAFSKLLTGRNASLLFTTLGTSALTTGYLLNRQKVSA), are a transit peptide targeting the mitochondrion. The tract at residues 40-64 (DAREQHKLFPPSADYPDLRKHNNCM) is cardiolipin-binding. Residues 46-132 (KLFPPSADYP…FDPVIKLRHN (87 aa)) form the Phosphagen kinase N-terminal domain. Positions 159-401 (YVLSSRVRTG…NYLVDCEKKL (243 aa)) constitute a Phosphagen kinase C-terminal domain. ATP-binding positions include 162 to 166 (SSRVR) and H225. Y255 is subject to Phosphotyrosine. ATP is bound by residues R270, R326, 354-359 (RGTGGV), and D369. T356 is modified (phosphothreonine).

It belongs to the ATP:guanido phosphotransferase family. Exists as an octamer composed of four CKMT2 homodimers.

It localises to the mitochondrion inner membrane. The enzyme catalyses creatine + ATP = N-phosphocreatine + ADP + H(+). Functionally, reversibly catalyzes the transfer of phosphate between ATP and various phosphogens (e.g. creatine phosphate). Creatine kinase isoenzymes play a central role in energy transduction in tissues with large, fluctuating energy demands, such as skeletal muscle, heart, brain and spermatozoa. The protein is Creatine kinase S-type, mitochondrial (Ckmt2) of Mus musculus (Mouse).